The primary structure comprises 181 residues: MKSIAVTGYKNFELGIFKKDADEAVYIKETIKRHLIPLIEDGLEWVIISGQLGIELWAGEVVALLKEEYPIKLAVLEPFEKQSANWNENNQLWAQEVIGAADYHAFITKRPYESPAQFAARDGFIIDNTDGALLVYDLEKEGSPKFFYDRAKLAKEQANYFLECIDFYALQDVVEDMNQTF.

This sequence belongs to the UPF0398 family.

The sequence is that of UPF0398 protein lin2003 from Listeria innocua serovar 6a (strain ATCC BAA-680 / CLIP 11262).